Consider the following 130-residue polypeptide: UPF0102 protein AHA_3896 (130 aa).

The protein belongs to the UPF0102 family.

This chain is UPF0102 protein AHA_3896, found in Aeromonas hydrophila subsp. hydrophila (strain ATCC 7966 / DSM 30187 / BCRC 13018 / CCUG 14551 / JCM 1027 / KCTC 2358 / NCIMB 9240 / NCTC 8049).